We begin with the raw amino-acid sequence, 198 residues long: Large ribosomal subunit protein bL12m (198 aa).

The transit peptide at 1 to 36 (MLPAAARPLWGPCLGLRAAAFRLARRQVPCVCAVRH) directs the protein to the mitochondrion. Residues lysine 125, lysine 138, lysine 142, and lysine 144 each carry the N6-acetyllysine modification. Lysine 150 bears the N6-acetyllysine; alternate mark. Lysine 150 carries the post-translational modification N6-succinyllysine; alternate. Lysine 150 is covalently cross-linked (Glycyl lysine isopeptide (Lys-Gly) (interchain with G-Cter in ubiquitin)). Lysine 162 carries the N6-succinyllysine modification. An N6-acetyllysine mark is found at lysine 163 and lysine 173. N6-acetyllysine; alternate is present on lysine 178. Lysine 178 carries the post-translational modification N6-succinyllysine; alternate. The residue at position 185 (lysine 185) is an N6-acetyllysine.

Belongs to the bacterial ribosomal protein bL12 family. As to quaternary structure, component of the mitochondrial large ribosomal subunit (mt-LSU). Mature mammalian 55S mitochondrial ribosomes consist of a small (28S) and a large (39S) subunit. The 28S small subunit contains a 12S ribosomal RNA (12S mt-rRNA) and 30 different proteins. The 39S large subunit contains a 16S rRNA (16S mt-rRNA), a copy of mitochondrial valine transfer RNA (mt-tRNA(Val)), which plays an integral structural role, and 52 different proteins. bL12m interacts with NOA1. In terms of processing, two mature forms are produced by differential two-step proteolytic cleavage. Cleaved by the mitochondrial processing protease to produce the long mature form and subsequently by the mitochondrial intermediate protease to produce the short mature form. In the presence of CUL3, undergoes 'Lys-63'-linked ubiquitination at Lys-150 which results in proteasomal degradation.

Its subcellular location is the mitochondrion matrix. As a component of the mitochondrial large ribosomal subunit, plays a role in mitochondrial translation. When present in mitochondria as a free protein not associated with the ribosome, associates with mitochondrial RNA polymerase POLRMT to activate transcription. Required for POLRMT stability. The protein is Large ribosomal subunit protein bL12m (MRPL12) of Homo sapiens (Human).